The chain runs to 469 residues: Collagenase 3 (469 aa).

Residues 1–17 form the signal peptide; sequence SSLSVLVLSLSFAYCLS. Positions 18-100 are cleaved as a propeptide — activation peptide; the sequence is APVPQDEDSE…QPRCGVPDVG (83 aa). A Cysteine switch motif is present at residues 92–99; that stretch reads PRCGVPDV. Position 94 (C94) interacts with Zn(2+). The N-linked (GlcNAc...) asparagine glycan is linked to N115. Residue D126 coordinates Ca(2+). N-linked (GlcNAc...) asparagine glycosylation occurs at N150. Ca(2+) is bound at residue D160. The Zn(2+) site is built by H170 and D172. Ca(2+)-binding residues include D177, G178, and L182. H185 lines the Zn(2+) pocket. The Ca(2+) site is built by G194 and D196. Residue H198 coordinates Zn(2+). Ca(2+)-binding residues include D200, D201, and E203. H220 contacts Zn(2+). E221 is an active-site residue. Residues H224, H230, and M238 each contribute to the Zn(2+) site. Residues 266-469 form an interaction with collagen region; the sequence is PGNRDPHPKH…ILKTNFVLMC (204 aa). Hemopexin repeat units follow at residues 279–328, 329–375, 377–425, and 426–469; these read PEKC…WPEL, PNKL…GFPK, LKAI…FPGI, and GEKV…VLMC. A disulfide bond links C282 and C469. Residues D289, I291, D333, A335, A383, and D430 each coordinate Ca(2+).

It belongs to the peptidase M10A family. It depends on Ca(2+) as a cofactor. Zn(2+) serves as cofactor. The proenzyme is activated by removal of the propeptide; this cleavage can be effected by other matrix metalloproteinases and may involve several cleavage steps. Cleavage can also be autocatalytic, after partial maturation by another protease or after treatment with 4-aminophenylmercuric acetate (APMA) (in vitro).

The protein localises to the secreted. The protein resides in the extracellular space. It is found in the extracellular matrix. Plays a role in the degradation of extracellular matrix proteins including fibrillar collagen, fibronectin, TNC and ACAN. Cleaves several types of triple helical collagen. May also function by activating or degrading key regulatory proteins. Plays a role in wound healing, tissue remodeling, cartilage degradation, bone development, bone mineralization and ossification. The protein is Collagenase 3 (mmp13) of Xenopus laevis (African clawed frog).